The sequence spans 62 residues: Photosystem II reaction center protein Z (62 aa).

The next 2 helical transmembrane spans lie at 8–28 (AVFA…VVLA) and 41–61 (FSGA…NSFI).

It belongs to the PsbZ family. As to quaternary structure, PSII is composed of 1 copy each of membrane proteins PsbA, PsbB, PsbC, PsbD, PsbE, PsbF, PsbH, PsbI, PsbJ, PsbK, PsbL, PsbM, PsbT, PsbY, PsbZ, Psb30/Ycf12, at least 3 peripheral proteins of the oxygen-evolving complex and a large number of cofactors. It forms dimeric complexes.

Its subcellular location is the plastid. It localises to the chloroplast thylakoid membrane. In terms of biological role, may control the interaction of photosystem II (PSII) cores with the light-harvesting antenna, regulates electron flow through the 2 photosystem reaction centers. PSII is a light-driven water plastoquinone oxidoreductase, using light energy to abstract electrons from H(2)O, generating a proton gradient subsequently used for ATP formation. In Anthoceros angustus (Hornwort), this protein is Photosystem II reaction center protein Z.